Reading from the N-terminus, the 214-residue chain is Urease accessory protein UreG 2 (214 aa).

22-29 (GPVGSGKT) lines the GTP pocket.

It belongs to the SIMIBI class G3E GTPase family. UreG subfamily. In terms of assembly, homodimer. UreD, UreF and UreG form a complex that acts as a GTP-hydrolysis-dependent molecular chaperone, activating the urease apoprotein by helping to assemble the nickel containing metallocenter of UreC. The UreE protein probably delivers the nickel.

Its subcellular location is the cytoplasm. Facilitates the functional incorporation of the urease nickel metallocenter. This process requires GTP hydrolysis, probably effectuated by UreG. This Bradyrhizobium sp. (strain BTAi1 / ATCC BAA-1182) protein is Urease accessory protein UreG 2.